The sequence spans 304 residues: Ribosome-inactivating protein 9 (304 aa).

The active site involves Glu208.

Belongs to the ribosome-inactivating protein family. Type 1 RIP subfamily. Monomer. In terms of tissue distribution, accumulates to high levels in seeds.

The protein resides in the cytoplasm. It catalyses the reaction Endohydrolysis of the N-glycosidic bond at one specific adenosine on the 28S rRNA.. In terms of biological role, possesses features of some constitutive defense agent. The coordinate Opaque-2-controlled synthesis of this protein and the major seed storage proteins (zeins) may provide the germinating seedling with both nutritional benefits and protection against pathogen invasion of the surrounding endosperm. The chain is Ribosome-inactivating protein 9 (CRIP9) from Zea mays (Maize).